A 353-amino-acid chain; its full sequence is Chorismate synthase (353 aa).

NADP(+) contacts are provided by arginine 48 and arginine 54. FMN contacts are provided by residues 125–127 (RSS), 238–239 (NA), glycine 278, 293–297 (KPTSS), and arginine 319.

Belongs to the chorismate synthase family. In terms of assembly, homotetramer. The cofactor is FMNH2.

The enzyme catalyses 5-O-(1-carboxyvinyl)-3-phosphoshikimate = chorismate + phosphate. Its pathway is metabolic intermediate biosynthesis; chorismate biosynthesis; chorismate from D-erythrose 4-phosphate and phosphoenolpyruvate: step 7/7. Catalyzes the anti-1,4-elimination of the C-3 phosphate and the C-6 proR hydrogen from 5-enolpyruvylshikimate-3-phosphate (EPSP) to yield chorismate, which is the branch point compound that serves as the starting substrate for the three terminal pathways of aromatic amino acid biosynthesis. This reaction introduces a second double bond into the aromatic ring system. This chain is Chorismate synthase, found in Bordetella pertussis (strain Tohama I / ATCC BAA-589 / NCTC 13251).